The chain runs to 450 residues: UDP-N-acetylmuramoylalanine--D-glutamate ligase (450 aa).

119–125 (GSNGKTT) contributes to the ATP binding site.

Belongs to the MurCDEF family.

The protein resides in the cytoplasm. The catalysed reaction is UDP-N-acetyl-alpha-D-muramoyl-L-alanine + D-glutamate + ATP = UDP-N-acetyl-alpha-D-muramoyl-L-alanyl-D-glutamate + ADP + phosphate + H(+). Its pathway is cell wall biogenesis; peptidoglycan biosynthesis. Functionally, cell wall formation. Catalyzes the addition of glutamate to the nucleotide precursor UDP-N-acetylmuramoyl-L-alanine (UMA). The sequence is that of UDP-N-acetylmuramoylalanine--D-glutamate ligase from Streptococcus pneumoniae (strain Hungary19A-6).